The primary structure comprises 257 residues: MSQIEFKNVSKVYPNCHVGLKNINLNIEKGEFAVIVGLSGAGKSTLLRSVNRLHDITSGEIFIQGKSITKAHGKALLKMRRNIGMIFQHFNLVKRSSVLRNVLSGRVGYHPTWKMVLGLFPKEDKIKAMDALERVNILDKYNQRSDELSGGQQQRISIARALCQESEIILADEPVASLDPLTTKQVMDDLRKINQELGITILINLHFVDLAKEYGTRIIGLRDGEVVYDGPASEATDDIFSEIYGRTIKEDEKLGVN.

In terms of domain architecture, ABC transporter spans isoleucine 4–isoleucine 248. An ATP-binding site is contributed by glycine 37 to serine 44.

Belongs to the ABC transporter superfamily. Phosphonates importer (TC 3.A.1.9.1) family. The complex is composed of two ATP-binding proteins (PhnC), two transmembrane proteins (PhnE) and a solute-binding protein (PhnD).

It localises to the cell membrane. The enzyme catalyses phosphonate(out) + ATP + H2O = phosphonate(in) + ADP + phosphate + H(+). Part of the ABC transporter complex PhnCDE involved in phosphonates import. Responsible for energy coupling to the transport system. This chain is Phosphonates import ATP-binding protein PhnC, found in Staphylococcus aureus (strain bovine RF122 / ET3-1).